Consider the following 308-residue polypeptide: Aspartate carbamoyltransferase catalytic subunit (308 aa).

Positions 49 and 50 each coordinate carbamoyl phosphate. Residue lysine 77 coordinates L-aspartate. 3 residues coordinate carbamoyl phosphate: arginine 99, histidine 127, and glutamine 130. 2 residues coordinate L-aspartate: arginine 160 and arginine 211. Carbamoyl phosphate is bound by residues alanine 252 and proline 253.

Belongs to the aspartate/ornithine carbamoyltransferase superfamily. ATCase family. As to quaternary structure, heterododecamer (2C3:3R2) of six catalytic PyrB chains organized as two trimers (C3), and six regulatory PyrI chains organized as three dimers (R2).

The enzyme catalyses carbamoyl phosphate + L-aspartate = N-carbamoyl-L-aspartate + phosphate + H(+). The protein operates within pyrimidine metabolism; UMP biosynthesis via de novo pathway; (S)-dihydroorotate from bicarbonate: step 2/3. Functionally, catalyzes the condensation of carbamoyl phosphate and aspartate to form carbamoyl aspartate and inorganic phosphate, the committed step in the de novo pyrimidine nucleotide biosynthesis pathway. The polypeptide is Aspartate carbamoyltransferase catalytic subunit (Geobacillus kaustophilus (strain HTA426)).